Consider the following 275-residue polypeptide: Ribosomal RNA small subunit methyltransferase A (275 aa).

Positions 27, 29, 54, 76, 102, and 123 each coordinate S-adenosyl-L-methionine.

The protein belongs to the class I-like SAM-binding methyltransferase superfamily. rRNA adenine N(6)-methyltransferase family. RsmA subfamily.

Its subcellular location is the cytoplasm. The enzyme catalyses adenosine(1518)/adenosine(1519) in 16S rRNA + 4 S-adenosyl-L-methionine = N(6)-dimethyladenosine(1518)/N(6)-dimethyladenosine(1519) in 16S rRNA + 4 S-adenosyl-L-homocysteine + 4 H(+). Functionally, specifically dimethylates two adjacent adenosines (A1518 and A1519) in the loop of a conserved hairpin near the 3'-end of 16S rRNA in the 30S particle. May play a critical role in biogenesis of 30S subunits. The polypeptide is Ribosomal RNA small subunit methyltransferase A (Chelativorans sp. (strain BNC1)).